Here is a 280-residue protein sequence, read N- to C-terminus: tRNA dimethylallyltransferase (280 aa).

An ATP-binding site is contributed by 9–16; that stretch reads GPTGSGKT. Substrate is bound at residue 11–16; the sequence is TGSGKT. The segment at 34-37 is interaction with substrate tRNA; the sequence is DSVS.

This sequence belongs to the IPP transferase family. Monomer. Mg(2+) is required as a cofactor.

It carries out the reaction adenosine(37) in tRNA + dimethylallyl diphosphate = N(6)-dimethylallyladenosine(37) in tRNA + diphosphate. Its function is as follows. Catalyzes the transfer of a dimethylallyl group onto the adenine at position 37 in tRNAs that read codons beginning with uridine, leading to the formation of N6-(dimethylallyl)adenosine (i(6)A). This Acholeplasma laidlawii (strain PG-8A) protein is tRNA dimethylallyltransferase.